Consider the following 183-residue polypeptide: Auxin-responsive protein IAA20 (183 aa).

Disordered regions lie at residues 1–23 and 42–77; these read MELE…TATA and GFEE…NKRR. An EAR-like (transcriptional repression) motif is present at residues 3-7; it reads LELGL. Positions 98-183 constitute a PB1 domain; it reads GGYVKVKMEG…KSVKRLKILV (86 aa).

Belongs to the Aux/IAA family. Homodimers and heterodimers. Expressed at very low levels in etiolated seedlings and flowers.

Its subcellular location is the nucleus. Its function is as follows. Aux/IAA proteins are short-lived transcriptional factors that function as repressors of early auxin response genes at low auxin concentrations. The polypeptide is Auxin-responsive protein IAA20 (IAA20) (Oryza sativa subsp. japonica (Rice)).